The sequence spans 213 residues: Serine acetyltransferase (213 aa).

The protein belongs to the transferase hexapeptide repeat family.

Its subcellular location is the cytoplasm. It carries out the reaction L-serine + acetyl-CoA = O-acetyl-L-serine + CoA. Its pathway is amino-acid biosynthesis; L-cysteine biosynthesis; L-cysteine from L-serine: step 1/2. The polypeptide is Serine acetyltransferase (cysE) (Staphylococcus aureus (strain COL)).